We begin with the raw amino-acid sequence, 428 residues long: Elongation factor 1-alpha (428 aa).

Residues lysine 5–threonine 217 form the tr-type G domain. Positions glycine 14–serine 21 are G1. Glycine 14–serine 21 is a GTP binding site. Serine 21 serves as a coordination point for Mg(2+). The G2 stretch occupies residues glycine 68–aspartate 72. The G3 stretch occupies residues aspartate 89–glycine 92. GTP is bound by residues aspartate 89–histidine 93 and asparagine 144–aspartate 147. The interval asparagine 144 to aspartate 147 is G4. Residues serine 181–tryptophan 183 are G5.

This sequence belongs to the TRAFAC class translation factor GTPase superfamily. Classic translation factor GTPase family. EF-Tu/EF-1A subfamily.

The protein localises to the cytoplasm. It carries out the reaction GTP + H2O = GDP + phosphate + H(+). Its function is as follows. GTP hydrolase that promotes the GTP-dependent binding of aminoacyl-tRNA to the A-site of ribosomes during protein biosynthesis. The protein is Elongation factor 1-alpha of Thermococcus sibiricus (strain DSM 12597 / MM 739).